A 226-amino-acid chain; its full sequence is Cytidylate kinase (226 aa).

10-18 (GFSSTGKST) contacts ATP.

The protein belongs to the cytidylate kinase family. Type 1 subfamily.

It is found in the cytoplasm. The catalysed reaction is CMP + ATP = CDP + ADP. It catalyses the reaction dCMP + ATP = dCDP + ADP. The sequence is that of Cytidylate kinase from Flavobacterium psychrophilum (strain ATCC 49511 / DSM 21280 / CIP 103535 / JIP02/86).